The chain runs to 2080 residues: Fatty acid synthase beta subunit TOXC (2080 aa).

The region spanning Gly-170–Lys-397 is the Starter acyltransferase (SAT) domain. The active-site For acetyltransferase activity is the Ser-276. The tract at residues Ser-585–Asp-830 is enoyl reductase (ER) domain. The tract at residues Gly-1155–Leu-1644 is dehydratase (DH) domain. The MaoC-like domain maps to Ser-1544–Ala-1662. The 365-residue stretch at Thr-1682 to Ser-2046 folds into the Malonyl-CoA:ACP transacylase (MAT) domain. The tract at residues Tyr-1683–Ser-2046 is malonyl/palmitoyl transferase (MT/PT) domain. The active-site For malonyltransferase activity is the Ser-1828.

The protein belongs to the fungal fatty acid synthetase subunit beta family.

The catalysed reaction is acetyl-CoA + n malonyl-CoA + 2n NADPH + 4n H(+) = a long-chain-acyl-CoA + n CoA + n CO2 + 2n NADP(+).. It carries out the reaction holo-[ACP] + acetyl-CoA = acetyl-[ACP] + CoA. It catalyses the reaction holo-[ACP] + malonyl-CoA = malonyl-[ACP] + CoA. The enzyme catalyses a (3R)-hydroxyacyl-[ACP] = a (2E)-enoyl-[ACP] + H2O. The catalysed reaction is a 2,3-saturated acyl-[ACP] + NAD(+) = a (2E)-enoyl-[ACP] + NADH + H(+). It carries out the reaction (9Z)-octadecenoyl-[ACP] + H2O = (9Z)-octadecenoate + holo-[ACP] + H(+). It functions in the pathway mycotoxin biosynthesis; HC-toxin biosynthesis. Its function is as follows. Fatty acid synthase beta subunit, part of the diffuse TOX2 gene cluster that mediates the biosynthesis of the HC-toxin, cyclic tetrapeptide of structure cyclo(D-Pro-L-Ala-D-Ala-L-Aeo), where Aeo stands for 2-amino-9,10-epoxi-8-oxodecanoic acid. HC-toxin is a determinant of specificity and virulence in the interaction between the producing fungus and its host, maize. TOXC contribute to the synthesis of the decanoic backbone of 2-amino-9,10-epoxi-8-oxodecanoic acid, an essential precursor for the production of the major forms of HC-toxin by the non-ribosomal peptide synthetase HTS1. The protein is Fatty acid synthase beta subunit TOXC of Cochliobolus carbonum (Maize leaf spot fungus).